Consider the following 183-residue polypeptide: uncharacterized protein (183 aa).

Positions 1 to 23 are disordered; it reads MGSSFVIDRSSSSPAPPRGPAPK.

This is an uncharacterized protein from Saccharomyces cerevisiae (strain ATCC 204508 / S288c) (Baker's yeast).